Reading from the N-terminus, the 455-residue chain is Bifunctional protein GlmU (455 aa).

Residues methionine 1 to proline 228 form a pyrophosphorylase region. UDP-N-acetyl-alpha-D-glucosamine contacts are provided by residues leucine 10–glycine 13, lysine 24, glutamine 76, glycine 81–threonine 82, tyrosine 103–aspartate 105, glycine 138, glutamate 153, asparagine 168, and asparagine 226. Aspartate 105 serves as a coordination point for Mg(2+). Asparagine 226 serves as a coordination point for Mg(2+). Residues tryptophan 229 to glutamine 249 form a linker region. Positions glycine 250–serine 455 are N-acetyltransferase. 2 residues coordinate UDP-N-acetyl-alpha-D-glucosamine: arginine 332 and lysine 350. The active-site Proton acceptor is the histidine 362. Positions 365 and 376 each coordinate UDP-N-acetyl-alpha-D-glucosamine. Residues alanine 379, asparagine 385–tyrosine 386, serine 404, alanine 422, and arginine 439 contribute to the acetyl-CoA site.

This sequence in the N-terminal section; belongs to the N-acetylglucosamine-1-phosphate uridyltransferase family. It in the C-terminal section; belongs to the transferase hexapeptide repeat family. As to quaternary structure, homotrimer. It depends on Mg(2+) as a cofactor.

It is found in the cytoplasm. It catalyses the reaction alpha-D-glucosamine 1-phosphate + acetyl-CoA = N-acetyl-alpha-D-glucosamine 1-phosphate + CoA + H(+). The catalysed reaction is N-acetyl-alpha-D-glucosamine 1-phosphate + UTP + H(+) = UDP-N-acetyl-alpha-D-glucosamine + diphosphate. It functions in the pathway nucleotide-sugar biosynthesis; UDP-N-acetyl-alpha-D-glucosamine biosynthesis; N-acetyl-alpha-D-glucosamine 1-phosphate from alpha-D-glucosamine 6-phosphate (route II): step 2/2. The protein operates within nucleotide-sugar biosynthesis; UDP-N-acetyl-alpha-D-glucosamine biosynthesis; UDP-N-acetyl-alpha-D-glucosamine from N-acetyl-alpha-D-glucosamine 1-phosphate: step 1/1. Its pathway is bacterial outer membrane biogenesis; LPS lipid A biosynthesis. In terms of biological role, catalyzes the last two sequential reactions in the de novo biosynthetic pathway for UDP-N-acetylglucosamine (UDP-GlcNAc). The C-terminal domain catalyzes the transfer of acetyl group from acetyl coenzyme A to glucosamine-1-phosphate (GlcN-1-P) to produce N-acetylglucosamine-1-phosphate (GlcNAc-1-P), which is converted into UDP-GlcNAc by the transfer of uridine 5-monophosphate (from uridine 5-triphosphate), a reaction catalyzed by the N-terminal domain. In Stenotrophomonas maltophilia (strain R551-3), this protein is Bifunctional protein GlmU.